The chain runs to 173 residues: Co-chaperone protein HscB homolog (173 aa).

Positions 5–77 (CHYALFDLQP…PRRARYLLAI (73 aa)) constitute a J domain.

The protein belongs to the HscB family. Interacts with HscA and stimulates its ATPase activity.

Functionally, co-chaperone involved in the maturation of iron-sulfur cluster-containing proteins. Seems to help targeting proteins to be folded toward HscA. This chain is Co-chaperone protein HscB homolog, found in Pseudomonas putida (strain ATCC 700007 / DSM 6899 / JCM 31910 / BCRC 17059 / LMG 24140 / F1).